Here is a 362-residue protein sequence, read N- to C-terminus: Aminomethyltransferase (362 aa).

It belongs to the GcvT family. The glycine cleavage system is composed of four proteins: P, T, L and H.

The enzyme catalyses N(6)-[(R)-S(8)-aminomethyldihydrolipoyl]-L-lysyl-[protein] + (6S)-5,6,7,8-tetrahydrofolate = N(6)-[(R)-dihydrolipoyl]-L-lysyl-[protein] + (6R)-5,10-methylene-5,6,7,8-tetrahydrofolate + NH4(+). The glycine cleavage system catalyzes the degradation of glycine. In Porphyromonas gingivalis (strain ATCC 33277 / DSM 20709 / CIP 103683 / JCM 12257 / NCTC 11834 / 2561), this protein is Aminomethyltransferase.